The sequence spans 574 residues: Aspartate--tRNA ligase (574 aa).

Residue Glu-172 participates in L-aspartate binding. The aspartate stretch occupies residues 196–199 (QIFK). Arg-218 provides a ligand contact to L-aspartate. ATP contacts are provided by residues 218–220 (RDE) and Gln-227. His-453 is a binding site for L-aspartate. Glu-487 is a binding site for ATP. Arg-494 is an L-aspartate binding site. Residue 539 to 542 (GLDR) coordinates ATP.

The protein belongs to the class-II aminoacyl-tRNA synthetase family. Type 1 subfamily. Homodimer.

It is found in the cytoplasm. The enzyme catalyses tRNA(Asp) + L-aspartate + ATP = L-aspartyl-tRNA(Asp) + AMP + diphosphate. Functionally, catalyzes the attachment of L-aspartate to tRNA(Asp) in a two-step reaction: L-aspartate is first activated by ATP to form Asp-AMP and then transferred to the acceptor end of tRNA(Asp). In Blochmanniella pennsylvanica (strain BPEN), this protein is Aspartate--tRNA ligase.